A 314-amino-acid chain; its full sequence is DDRGK domain-containing protein 1 (314 aa).

A helical transmembrane segment spans residues 1–28; the sequence is MVAPVWYLVAAALLVGFILFLTRSRGRA. Residues 1-114 form a mediates interaction with CDK5RAP3 region; that stretch reads MVAPVWYLVA…VEKPAETHLS (114 aa). Over 29–314 the chain is Cytoplasmic; sequence ASAGQEPLHN…GRESPAQAPA (286 aa). Disordered regions lie at residues 31–75 and 100–186; these read AGQE…SRLQ and QEEE…QREH. Phosphoserine is present on residues serine 72 and serine 114. Residues 118–216 are mediates interaction with TRIP4; sequence GAKKLRKLEE…MTEEQSQSFL (99 aa). A compositionally biased stretch (basic and acidic residues) spans 124-186; it reads KLEEKQARKA…AREEQAQREH (63 aa). The short motif at 195–209 is the UFM1-interacting motif (UFIM) element; it reads AFVVEEEGVGETMTE. Positions 216-314 are mediates interaction with UFL1; it reads LTEFINYIKQ…GRESPAQAPA (99 aa). Residues 229–273 enclose the PCI domain; that stretch reads VLLEDLASQVGLRTQDTINRIQDLLAEGTITGVIDDRGKFIYITP. A Glycyl lysine isopeptide (Lys-Gly) (interchain with G-Cter in UFM1) cross-link involves residue lysine 267.

This sequence belongs to the DDRGK1 family. As to quaternary structure, component of the UFM1 ribosome E3 ligase (UREL) complex, composed of UFL1, DDRGK1 and CDK5RAP3. Interacts with (unphosphorylated) ERN1/IRE1-alpha; interaction is dependent on UFM1 and takes place in response to endoplasmic reticulum stress, regulating ERN1/IRE1-alpha stability. Interacts with NFKBIA. Interacts with SOX9. Ubiquitinated. Ubiquitination probably triggers proteasomal degradation and is negatively regulated by UFL1, the enzyme involved in the ufmylation of DDRGK1. Post-translationally, ufmylated; conjugated to ubiquitin-like protein UFM1, probably at Lys-267 by UFL1. The relevance of ufmylation is however unclear: as DDRGK1 acts as a substrate adapters for ufmylation, it is uncertain whether ufmylation is a collateral effect of ufmylation process or is required to regulate its activity. In terms of tissue distribution, widely expressed (at protein level). In the brain, highest levels in medulla oblongata, followed by cerebral cortex, cerebellum and frontal lobe.

It localises to the endoplasmic reticulum membrane. Its function is as follows. Component of the UFM1 ribosome E3 ligase (UREL) complex, a multiprotein complex that catalyzes ufmylation of endoplasmic reticulum-docked proteins. The UREL complex plays a key role in ribosome recycling by mediating mono-ufmylation of the RPL26/uL24 subunit of the 60S ribosome following ribosome dissociation: ufmylation weakens the junction between post-termination 60S subunits and SEC61 translocons, promoting release and recycling of the large ribosomal subunit from the endoplasmic reticulum membrane. Ufmylation of RPL26/uL24 and subsequent 60S ribosome recycling either take place after normal termination of translation or after ribosome stalling during cotranslational translocation at the endoplasmic reticulum. Within the UREL complex, DDRGK1 tethers the complex to the endoplasmic reticulum membrane to restrict its activity to endoplasmic reticulum-docked ribosomes and acts as an ufmylation 'reader': following RPL26/uL24 ufmylation, DDRGK1 specifically binds to ufmylated RPL26/uL24 via its UFIM motif, resulting in stable association between the 60S ribosome and the UREL complex, followed by dissociation of the 60S ribosome subunit from the endoplasmic reticulum membrane. The UREL complex is also involved in reticulophagy in response to endoplasmic reticulum stress by promoting ufmylation of proteins such as CYB5R3 and RPN1, thereby promoting lysosomal degradation of ufmylated proteins. Ufmylation-dependent reticulophagy inhibits the unfolded protein response (UPR) by regulating ERN1/IRE1-alpha stability. Acts as a regulator of immunity by promoting differentiation of B-cells into plasma cells: acts by promoting expansion of the endoplasmic reticulum and regulating the unfolded protein response (UPR). May also be required for TRIP4 ufmylation. May play a role in NF-kappa-B-mediated transcription through regulation of the phosphorylation and the degradation of NFKBIA, the inhibitor of NF-kappa-B. Plays a role in cartilage development through SOX9, inhibiting the ubiquitin-mediated proteasomal degradation of this transcriptional regulator. Required for stabilization and ufmylation of ATG9A. The chain is DDRGK domain-containing protein 1 from Homo sapiens (Human).